The primary structure comprises 450 residues: Plasmepsin VII (450 aa).

An N-terminal signal peptide occupies residues 1–24 (MNKNIIQIYLFVFILLLKQHIVIL). A Peptidase A1 domain is found at 92–441 (YYGEVQIGEQ…DKDNLKIGFV (350 aa)). Active-site residues include D111 and D324.

Belongs to the peptidase A1 family.

Its subcellular location is the cytoplasm. This is Plasmepsin VII from Plasmodium falciparum (isolate NF54).